The primary structure comprises 471 residues: UTP--glucose-1-phosphate uridylyltransferase (471 aa).

UTP is bound by residues 87–90 (LNGG), Lys-101, Gln-164, and Gly-193. Position 89–90 (89–90 (GG)) interacts with substrate. Substrate-binding positions include His-194 and 222–224 (NSD). The UTP site is built by Asp-224 and Lys-362.

It belongs to the UDPGP type 1 family.

The protein localises to the cytoplasm. It carries out the reaction alpha-D-glucose 1-phosphate + UTP + H(+) = UDP-alpha-D-glucose + diphosphate. Functionally, plays a central role as a glucosyl donor in cellular metabolic pathways. This chain is UTP--glucose-1-phosphate uridylyltransferase (UGP), found in Astragalus penduliflorus (Mountain lentil).